A 35-amino-acid polypeptide reads, in one-letter code: Photosystem I reaction center subunit Z (35 aa).

Residues 10-30 traverse the membrane as a helical segment; that stretch reads LVIITTLVVPFMAAAALLFII.

As to quaternary structure, the G.violaceus PSI reaction center is composed of one copy each of PsaA,B,C,D,E,F,L,M and Z, and forms trimeric complexes.

The protein resides in the cell inner membrane. The polypeptide is Photosystem I reaction center subunit Z (psaZ) (Gloeobacter violaceus (strain ATCC 29082 / PCC 7421)).